The following is a 656-amino-acid chain: F-box/LRR-repeat protein 10 (656 aa).

Positions 20 to 66 (ERSLDLLPAALLETIMTKLDVASLCSLASTCKTLKSCVTRVLTFTPN) constitute an F-box domain. LRR repeat units follow at residues 71-96 (NVSL…KLDC), 120-145 (CRDF…CLGS), 151-176 (GRSI…ALMF), 194-221 (SDRL…EISG), 243-268 (VDCI…DIRD), 277-301 (VSDL…SLIR), 310-335 (FRRV…CLGG), 336-361 (FCRV…SIYH), 362-387 (GPKL…SLRR), 388-412 (CHLL…DLRG), 413-437 (CRNL…LLDG), 439-463 (DISD…SVRG), 464-491 (CRNL…DLSN), 492-517 (LPNL…QLRE), 518-551 (CRLI…DLYD), and 552-578 (CGGI…GITG). A disordered region spans residues 632 to 656 (ILGDEGDVEMEDAEDESEEDASEED).

The chain is F-box/LRR-repeat protein 10 (FBL10) from Arabidopsis thaliana (Mouse-ear cress).